Here is a 515-residue protein sequence, read N- to C-terminus: Protein translocase subunit SecD (515 aa).

6 consecutive transmembrane segments (helical) span residues 5-25 (LIAK…LATP), 353-373 (KGIL…VAYY), 375-395 (LSGL…MGLL), 398-418 (FGAT…GIAV), 450-470 (FSTI…LFQF), and 477-497 (GFAV…ILCT).

Belongs to the SecD/SecF family. SecD subfamily. As to quaternary structure, forms a complex with SecF. Part of the essential Sec protein translocation apparatus which comprises SecA, SecYEG and auxiliary proteins SecDF. Other proteins may also be involved.

It is found in the cell inner membrane. Functionally, part of the Sec protein translocase complex. Interacts with the SecYEG preprotein conducting channel. SecDF uses the proton motive force (PMF) to complete protein translocation after the ATP-dependent function of SecA. In Desulfurispirillum indicum (strain ATCC BAA-1389 / DSM 22839 / S5), this protein is Protein translocase subunit SecD.